Consider the following 195-residue polypeptide: Imidazoleglycerol-phosphate dehydratase (195 aa).

The protein belongs to the imidazoleglycerol-phosphate dehydratase family.

It localises to the cytoplasm. The enzyme catalyses D-erythro-1-(imidazol-4-yl)glycerol 3-phosphate = 3-(imidazol-4-yl)-2-oxopropyl phosphate + H2O. The protein operates within amino-acid biosynthesis; L-histidine biosynthesis; L-histidine from 5-phospho-alpha-D-ribose 1-diphosphate: step 6/9. The protein is Imidazoleglycerol-phosphate dehydratase of Shouchella clausii (strain KSM-K16) (Alkalihalobacillus clausii).